The primary structure comprises 1921 residues: Putative callose synthase 6 (1921 aa).

The segment at Met1 to Ala23 is disordered. Topologically, residues Met1–Arg492 are cytoplasmic. A helical membrane pass occupies residues Met493–Gly513. At Ser514–Thr526 the chain is on the extracellular side. Residues Val527–Ile547 traverse the membrane as a helical segment. The Cytoplasmic portion of the chain corresponds to Leu548–Gln560. The helical transmembrane segment at Ile561–Ala581 threads the bilayer. Residues Tyr582–Tyr611 lie on the Extracellular side of the membrane. The helical transmembrane segment at Ala612–Phe632 threads the bilayer. Residues Arg633 to Phe674 are Cytoplasmic-facing. The helical transmembrane segment at Trp675–Ile695 threads the bilayer. The Extracellular segment spans residues Thr696–Asn721. The helical transmembrane segment at Ile722–Ile742 threads the bilayer. At Trp743 to Tyr1484 the chain is on the cytoplasmic side. A helical membrane pass occupies residues Phe1485 to Leu1505. Topologically, residues Tyr1506 to Ser1540 are extracellular. Residues Ile1541–Gly1561 form a helical membrane-spanning segment. The Cytoplasmic segment spans residues Phe1562–Ser1564. A helical transmembrane segment spans residues Ala1565–Leu1585. The Extracellular portion of the chain corresponds to Gly1586–His1628. A helical membrane pass occupies residues Phe1629–Tyr1649. The Cytoplasmic segment spans residues Arg1650 to Tyr1655. The chain crosses the membrane as a helical span at residues Leu1656 to Phe1676. At Asn1677–Arg1730 the chain is on the extracellular side. The chain crosses the membrane as a helical span at residues Ile1731–Leu1751. The Cytoplasmic portion of the chain corresponds to Asn1752–Ser1759. Residues Phe1760–Val1780 form a helical membrane-spanning segment. Residues Ser1781 to Arg1796 are Extracellular-facing. Residues Ile1797–Phe1817 form a helical membrane-spanning segment. The Cytoplasmic segment spans residues Lys1818–Asp1823. The helical transmembrane segment at Leu1824–Val1844 threads the bilayer. The Extracellular portion of the chain corresponds to Leu1845–Asn1867. A helical membrane pass occupies residues Ile1868–Glu1888. Residues Phe1889 to Lys1921 are Cytoplasmic-facing.

It belongs to the glycosyltransferase 48 family.

Its subcellular location is the cell membrane. The enzyme catalyses [(1-&gt;3)-beta-D-glucosyl](n) + UDP-alpha-D-glucose = [(1-&gt;3)-beta-D-glucosyl](n+1) + UDP + H(+). Functionally, probably involved in callose synthesis, but not required for callose formation after wounding or pathogen attack. During plant growth and development, callose is found as a transitory component of the cell plate in dividing cells, is a major component of pollen mother cell walls and pollen tubes, and is found as a structural component of plasmodesmatal canals. The polypeptide is Putative callose synthase 6 (CALS6) (Arabidopsis thaliana (Mouse-ear cress)).